The primary structure comprises 669 residues: DNA ligase (669 aa).

Residues 33-37, 82-83, and E115 each bind NAD(+); these read DLTYD and SL. K117 acts as the N6-AMP-lysine intermediate in catalysis. The NAD(+) site is built by R138, E172, K286, and K310. Zn(2+) is bound by residues C401, C404, C417, and C422.

Belongs to the NAD-dependent DNA ligase family. LigA subfamily. It depends on Mg(2+) as a cofactor. Mn(2+) serves as cofactor.

The enzyme catalyses NAD(+) + (deoxyribonucleotide)n-3'-hydroxyl + 5'-phospho-(deoxyribonucleotide)m = (deoxyribonucleotide)n+m + AMP + beta-nicotinamide D-nucleotide.. Functionally, DNA ligase that catalyzes the formation of phosphodiester linkages between 5'-phosphoryl and 3'-hydroxyl groups in double-stranded DNA using NAD as a coenzyme and as the energy source for the reaction. It is essential for DNA replication and repair of damaged DNA. The polypeptide is DNA ligase (Borrelia hermsii (strain HS1 / DAH)).